A 296-amino-acid chain; its full sequence is uncharacterized protein (296 aa).

2 CBS domains span residues 176–232 and 236–292; these read GIKE…DKKV and MRRD…KFPE.

This is an uncharacterized protein from Methanocaldococcus jannaschii (strain ATCC 43067 / DSM 2661 / JAL-1 / JCM 10045 / NBRC 100440) (Methanococcus jannaschii).